Here is a 680-residue protein sequence, read N- to C-terminus: Methionine--tRNA ligase (680 aa).

The 'HIGH' region motif lies at 15–25 (PYANGPVHIGH). 4 residues coordinate Zn(2+): cysteine 147, cysteine 150, cysteine 160, and cysteine 163. Residues 332–336 (KISTS) carry the 'KMSKS' region motif. Threonine 335 is an ATP binding site. The tRNA-binding domain occupies 578 to 680 (EFEKLDIRVG…REVKPGSEVK (103 aa)).

This sequence belongs to the class-I aminoacyl-tRNA synthetase family. MetG type 1 subfamily. Homodimer. Requires Zn(2+) as cofactor.

It localises to the cytoplasm. It carries out the reaction tRNA(Met) + L-methionine + ATP = L-methionyl-tRNA(Met) + AMP + diphosphate. Is required not only for elongation of protein synthesis but also for the initiation of all mRNA translation through initiator tRNA(fMet) aminoacylation. The protein is Methionine--tRNA ligase of Phocaeicola vulgatus (strain ATCC 8482 / DSM 1447 / JCM 5826 / CCUG 4940 / NBRC 14291 / NCTC 11154) (Bacteroides vulgatus).